The sequence spans 351 residues: Nicotinate-nucleotide--dimethylbenzimidazole phosphoribosyltransferase (351 aa).

The Proton acceptor role is filled by Glu317.

It belongs to the CobT family.

It carries out the reaction 5,6-dimethylbenzimidazole + nicotinate beta-D-ribonucleotide = alpha-ribazole 5'-phosphate + nicotinate + H(+). Its pathway is nucleoside biosynthesis; alpha-ribazole biosynthesis; alpha-ribazole from 5,6-dimethylbenzimidazole: step 1/2. Its function is as follows. Catalyzes the synthesis of alpha-ribazole-5'-phosphate from nicotinate mononucleotide (NAMN) and 5,6-dimethylbenzimidazole (DMB). This Pseudomonas putida (strain ATCC 700007 / DSM 6899 / JCM 31910 / BCRC 17059 / LMG 24140 / F1) protein is Nicotinate-nucleotide--dimethylbenzimidazole phosphoribosyltransferase.